A 613-amino-acid polypeptide reads, in one-letter code: DNA mismatch repair protein MutL (613 aa).

The protein belongs to the DNA mismatch repair MutL/HexB family.

This protein is involved in the repair of mismatches in DNA. It is required for dam-dependent methyl-directed DNA mismatch repair. May act as a 'molecular matchmaker', a protein that promotes the formation of a stable complex between two or more DNA-binding proteins in an ATP-dependent manner without itself being part of a final effector complex. The chain is DNA mismatch repair protein MutL from Bradyrhizobium sp. (strain ORS 278).